The sequence spans 331 residues: L-lactate dehydrogenase A chain (331 aa).

Residues Gly-29–Lys-57 and Arg-98 contribute to the NAD(+) site. Substrate contacts are provided by Arg-105, Asn-137, and Arg-168. Asn-137 lines the NAD(+) pocket. The active-site Proton acceptor is the His-192. Substrate is bound at residue Thr-247.

It belongs to the LDH/MDH superfamily. LDH family. Homotetramer.

It is found in the cytoplasm. It catalyses the reaction (S)-lactate + NAD(+) = pyruvate + NADH + H(+). It participates in fermentation; pyruvate fermentation to lactate; (S)-lactate from pyruvate: step 1/1. Functionally, interconverts simultaneously and stereospecifically pyruvate and lactate with concomitant interconversion of NADH and NAD(+). This chain is L-lactate dehydrogenase A chain (ldha), found in Parachaenichthys charcoti (Charcot's dragonfish).